The sequence spans 116 residues: Small ribosomal subunit protein bS16 (116 aa).

A disordered region spans residues 88-116 (RNNPKAAVPGKRMAELAKKKAERAAASAE). Positions 99–110 (RMAELAKKKAER) are enriched in basic and acidic residues.

Belongs to the bacterial ribosomal protein bS16 family.

This chain is Small ribosomal subunit protein bS16, found in Cereibacter sphaeroides (strain ATCC 17025 / ATH 2.4.3) (Rhodobacter sphaeroides).